Reading from the N-terminus, the 549-residue chain is ATP synthase subunit alpha (549 aa).

An ATP-binding site is contributed by 172-179; that stretch reads GDRKTGKT. The disordered stretch occupies residues 513–549; sequence SSTGESVVPDEHVEAMDEEDLGKESVKVKKPAPQKKK. A compositionally biased stretch (basic residues) spans 540 to 549; the sequence is VKKPAPQKKK.

It belongs to the ATPase alpha/beta chains family. As to quaternary structure, F-type ATPases have 2 components, CF(1) - the catalytic core - and CF(0) - the membrane proton channel. CF(1) has five subunits: alpha(3), beta(3), gamma(1), delta(1), epsilon(1). CF(0) has three main subunits: a(1), b(2) and c(9-12). The alpha and beta chains form an alternating ring which encloses part of the gamma chain. CF(1) is attached to CF(0) by a central stalk formed by the gamma and epsilon chains, while a peripheral stalk is formed by the delta and b chains.

The protein localises to the cell membrane. The enzyme catalyses ATP + H2O + 4 H(+)(in) = ADP + phosphate + 5 H(+)(out). Its function is as follows. Produces ATP from ADP in the presence of a proton gradient across the membrane. The alpha chain is a regulatory subunit. The sequence is that of ATP synthase subunit alpha from Mycobacterium marinum (strain ATCC BAA-535 / M).